We begin with the raw amino-acid sequence, 1183 residues long: Peroxisomal ATPase PEX6 (1183 aa).

The segment at 161–205 is disordered; the sequence is ESRGKKTGEPEDGPLANGIDLNGVDDSDSDEDVLSQGDDDDENNV. Over residues 183-204 the composition is skewed to acidic residues; it reads GVDDSDSDEDVLSQGDDDDENN. An AAA-cassette D1 region spans residues 576–785; the sequence is LPNNYISPVH…VERAMTACSE (210 aa). Residues 878 to 1070 form an AAA-cassette D2 region; it reads GILFYGPPGT…CSDAMLKAIT (193 aa). 883 to 890 provides a ligand contact to ATP; the sequence is GPPGTGKT. A disordered region spans residues 1160 to 1183; sequence IMVDGPGTGGEGAFGDDGDEEGLY. Acidic residues predominate over residues 1173-1183; the sequence is FGDDGDEEGLY.

It belongs to the AAA ATPase family. In terms of assembly, interacts with PEX1; forming the PEX1-PEX6 AAA ATPase complex, which is composed of a heterohexamer formed by a trimer of PEX1-PEX6 dimers.

The protein resides in the cytoplasm. The protein localises to the cytosol. It localises to the peroxisome membrane. The catalysed reaction is ATP + H2O = ADP + phosphate + H(+). In terms of biological role, component of the PEX1-PEX6 AAA ATPase complex, a protein dislocase complex that mediates the ATP-dependent extraction of the PEX5 receptor from peroxisomal membranes, an essential step for PEX5 recycling. Specifically recognizes PEX5 monoubiquitinated at 'Cys-6', and pulls it out of the peroxisome lumen through the PEX2-PEX10-PEX12 retrotranslocation channel. Extraction by the PEX1-PEX6 AAA ATPase complex is accompanied by unfolding of the TPR repeats and release of bound cargo from PEX5. Regulates autophagy and biogenesis of peroxisomes and Woronin bodies. Plays important roles in mycelial growth and development and stress response. Is also essential for conidiation and fatty acid utilization. Required for nematode predation via trap formation. This chain is Peroxisomal ATPase PEX6, found in Arthrobotrys oligospora (strain ATCC 24927 / CBS 115.81 / DSM 1491) (Nematode-trapping fungus).